A 633-amino-acid polypeptide reads, in one-letter code: Alpha-amylase (633 aa).

The active-site Nucleophile is the glutamate 123. Aspartate 214 serves as the catalytic Proton donor.

Belongs to the glycosyl hydrolase 57 family.

The catalysed reaction is Endohydrolysis of (1-&gt;4)-alpha-D-glucosidic linkages in polysaccharides containing three or more (1-&gt;4)-alpha-linked D-glucose units.. The polypeptide is Alpha-amylase (amyA) (Pyrococcus horikoshii (strain ATCC 700860 / DSM 12428 / JCM 9974 / NBRC 100139 / OT-3)).